We begin with the raw amino-acid sequence, 107 residues long: IQ domain-containing protein F6 (107 aa).

One can recognise an IQ domain in the interval 42 to 71 (QEWAVVKVQAQVRMWQARRRFLQARQAACI).

The protein is IQ domain-containing protein F6 (IQCF6) of Homo sapiens (Human).